A 392-amino-acid chain; its full sequence is Queuine tRNA-ribosyltransferase (392 aa).

The active-site Proton acceptor is Asp-92. Substrate contacts are provided by residues 92-96, Asp-146, Gln-188, and Gly-215; that span reads DSGGF. The tract at residues 246-252 is RNA binding; that stretch reads GVGSPED. Catalysis depends on Asp-265, which acts as the Nucleophile. The RNA binding; important for wobble base 34 recognition stretch occupies residues 270 to 274; it reads TRLGR. Positions 303, 305, 308, and 334 each coordinate Zn(2+).

Belongs to the queuine tRNA-ribosyltransferase family. As to quaternary structure, homodimer. Within each dimer, one monomer is responsible for RNA recognition and catalysis, while the other monomer binds to the replacement base PreQ1. Zn(2+) serves as cofactor.

It catalyses the reaction 7-aminomethyl-7-carbaguanine + guanosine(34) in tRNA = 7-aminomethyl-7-carbaguanosine(34) in tRNA + guanine. The protein operates within tRNA modification; tRNA-queuosine biosynthesis. Its function is as follows. Catalyzes the base-exchange of a guanine (G) residue with the queuine precursor 7-aminomethyl-7-deazaguanine (PreQ1) at position 34 (anticodon wobble position) in tRNAs with GU(N) anticodons (tRNA-Asp, -Asn, -His and -Tyr). Catalysis occurs through a double-displacement mechanism. The nucleophile active site attacks the C1' of nucleotide 34 to detach the guanine base from the RNA, forming a covalent enzyme-RNA intermediate. The proton acceptor active site deprotonates the incoming PreQ1, allowing a nucleophilic attack on the C1' of the ribose to form the product. After dissociation, two additional enzymatic reactions on the tRNA convert PreQ1 to queuine (Q), resulting in the hypermodified nucleoside queuosine (7-(((4,5-cis-dihydroxy-2-cyclopenten-1-yl)amino)methyl)-7-deazaguanosine). The polypeptide is Queuine tRNA-ribosyltransferase (Herpetosiphon aurantiacus (strain ATCC 23779 / DSM 785 / 114-95)).